We begin with the raw amino-acid sequence, 479 residues long: MDATTAPHRIPPEMPQYGEDYYIFEMMQNMLEQLLIHQPEDPISFMITHLRRNNDNVPKVVILGPPASGKTTIAMWLCKHLNSNLITKESLLEREFSRLSVEAKSYYQVYKKIPNSILVSLVQERLNEDDCLRKGWILDGIPERREQALMIQTLGLAPKHVIVLNAPDTVLIERNVGKRIDPVTGEIYHTTFDWPPEPEIQNRLRQPEGISEIETAKKLLEYHRHIIRILPSYPKILKTISSDQPCVDVFYQALTYVQSGHRCNAPFTPKVLLCGPLGSGKRLQATLLAQKYGLVNISCGQLLKEAVAAKSSFGELIQPFFEKRMTVPDSIITKVLADRMEQQDCIQKGWVLHGFPRDLDQARMLNSMGYNPNRVFFLSVPLDSILERLTLRRTDPVTGERFHLMYKPPPTIEVQVRLLQNPKDSEEYIKLQTDLFYRNSGDLEQYYDRAIIVNGDQDPYTVFEYIESGIINPLPRKVT.

Adenylate kinase regions lie at residues 58 to 258 (PKVV…TYVQ) and 269 to 471 (PKVL…SGII). 67–72 (ASGKTT) is a binding site for ATP. Positions 87 to 113 (TKESLLEREFSRLSVEAKSYYQVYKKI) are NMP 1. AMP-binding positions include 140–143 (GIPE), Gln147, and Arg203. Positions 177 to 206 (GKRIDPVTGEIYHTTFDWPPEPEIQNRLRQ) are LID 1. Residue 278–283 (GSGKRL) coordinates ATP. The segment at 298-327 (SCGQLLKEAVAAKSSFGELIQPFFEKRMTV) is NMP 2. Residues 325 to 327 (MTV), 354 to 357 (GFPR), and Gln361 each bind AMP. Residues 391–424 (LRRTDPVTGERFHLMYKPPPTIEVQVRLLQNPKD) form an LID 2 region. Arg392 contacts ATP.

Belongs to the adenylate kinase family. Interacts with CFAP45 and CFAP52; CFAP45 and AK8 dimerization may create a cavity at the interface of the dimer that can accommodate AMP.

The protein resides in the cytoplasm. The protein localises to the cytosol. Its subcellular location is the cytoskeleton. It localises to the cilium axoneme. The catalysed reaction is AMP + ATP = 2 ADP. It catalyses the reaction a 2'-deoxyribonucleoside 5'-diphosphate + ATP = a 2'-deoxyribonucleoside 5'-triphosphate + ADP. It carries out the reaction a ribonucleoside 5'-diphosphate + ATP = a ribonucleoside 5'-triphosphate + ADP. Nucleoside monophosphate (NMP) kinase that catalyzes the reversible transfer of the terminal phosphate group between nucleoside triphosphates and monophosphates. Has highest activity toward AMP, and weaker activity toward dAMP, CMP and dCMP. Also displays broad nucleoside diphosphate kinase activity. This Mus musculus (Mouse) protein is Adenylate kinase 8 (Ak8).